The chain runs to 570 residues: Proline--tRNA ligase (570 aa).

Belongs to the class-II aminoacyl-tRNA synthetase family. ProS type 1 subfamily. Homodimer.

It is found in the cytoplasm. It carries out the reaction tRNA(Pro) + L-proline + ATP = L-prolyl-tRNA(Pro) + AMP + diphosphate. Functionally, catalyzes the attachment of proline to tRNA(Pro) in a two-step reaction: proline is first activated by ATP to form Pro-AMP and then transferred to the acceptor end of tRNA(Pro). As ProRS can inadvertently accommodate and process non-cognate amino acids such as alanine and cysteine, to avoid such errors it has two additional distinct editing activities against alanine. One activity is designated as 'pretransfer' editing and involves the tRNA(Pro)-independent hydrolysis of activated Ala-AMP. The other activity is designated 'posttransfer' editing and involves deacylation of mischarged Ala-tRNA(Pro). The misacylated Cys-tRNA(Pro) is not edited by ProRS. The sequence is that of Proline--tRNA ligase from Pelotomaculum thermopropionicum (strain DSM 13744 / JCM 10971 / SI).